Reading from the N-terminus, the 200-residue chain is Non-specific lipid transfer protein GPI-anchored 16 (200 aa).

An N-terminal signal peptide occupies residues M1–G20. 4 disulfide bridges follow: C27–C72, C38–C56, C57–C98, and C70–C107. N87 carries N-linked (GlcNAc...) asparagine glycosylation. The segment at S134–S182 is disordered. Residues A140–T163 show a composition bias toward low complexity. The GPI-anchor amidated threonine moiety is linked to residue T177. A propeptide spans G178–L200 (removed in mature form).

This sequence belongs to the plant LTP family. As to expression, expressed in seedlings, preferentially in hypocotyls and roots. Also observed in siliques.

The protein resides in the cell membrane. Its function is as follows. Essential protein involved in female gametophyte development. Probable lipid transfer protein. The protein is Non-specific lipid transfer protein GPI-anchored 16 of Arabidopsis thaliana (Mouse-ear cress).